We begin with the raw amino-acid sequence, 195 residues long: Ureidoglycolate lyase (195 aa).

Belongs to the ureidoglycolate lyase family. Homodimer.

The catalysed reaction is (S)-ureidoglycolate = urea + glyoxylate. It functions in the pathway nitrogen metabolism; (S)-allantoin degradation. Functionally, catalyzes the catabolism of the allantoin degradation intermediate (S)-ureidoglycolate, generating urea and glyoxylate. Involved in the utilization of allantoin as secondary nitrogen source when primary sources are limiting. The polypeptide is Ureidoglycolate lyase (DAL3) (Saccharomyces cerevisiae (strain ATCC 204508 / S288c) (Baker's yeast)).